A 255-amino-acid chain; its full sequence is Large ribosomal subunit protein uL6m (255 aa).

Residues 39 to 61 form a disordered region; it reads AARRNFSATTTRPSKLGRTPLSI.

The protein belongs to the universal ribosomal protein uL6 family. Component of the mitochondrial large ribosomal subunit (mt-LSU). Mature N.crassa 74S mitochondrial ribosomes consist of a small (37S) and a large (54S) subunit. The 37S small subunit contains a 16S ribosomal RNA (16S mt-rRNA) and 32 different proteins. The 54S large subunit contains a 23S rRNA (23S mt-rRNA) and 42 different proteins.

The protein localises to the mitochondrion. In terms of biological role, component of the mitochondrial ribosome (mitoribosome), a dedicated translation machinery responsible for the synthesis of mitochondrial genome-encoded proteins, including at least some of the essential transmembrane subunits of the mitochondrial respiratory chain. The mitoribosomes are attached to the mitochondrial inner membrane and translation products are cotranslationally integrated into the membrane. The chain is Large ribosomal subunit protein uL6m (mrpl6) from Neurospora crassa (strain ATCC 24698 / 74-OR23-1A / CBS 708.71 / DSM 1257 / FGSC 987).